The following is a 302-amino-acid chain: Proteasome subunit beta (302 aa).

The propeptide at 1–50 is removed in mature form; by autocatalysis; the sequence is MTITGSRGFPDGYLAPGSSFLDFAAQHAPTIMPGTQPTFDTIPQDIAPHG. Threonine 51 (nucleophile) is an active-site residue. The tract at residues 277 to 302 is disordered; it reads EPGRDGPGNRLPSQGSATIIPESDQS. Residues 287 to 302 show a composition bias toward polar residues; that stretch reads LPSQGSATIIPESDQS.

Belongs to the peptidase T1B family. As to quaternary structure, the 20S proteasome core is composed of 14 alpha and 14 beta subunits that assemble into four stacked heptameric rings, resulting in a barrel-shaped structure. The two inner rings, each composed of seven catalytic beta subunits, are sandwiched by two outer rings, each composed of seven alpha subunits. The catalytic chamber with the active sites is on the inside of the barrel. Has a gated structure, the ends of the cylinder being occluded by the N-termini of the alpha-subunits. Is capped by the proteasome-associated ATPase, ARC.

It localises to the cytoplasm. It carries out the reaction Cleavage of peptide bonds with very broad specificity.. Its pathway is protein degradation; proteasomal Pup-dependent pathway. The formation of the proteasomal ATPase ARC-20S proteasome complex, likely via the docking of the C-termini of ARC into the intersubunit pockets in the alpha-rings, may trigger opening of the gate for substrate entry. Interconversion between the open-gate and close-gate conformations leads to a dynamic regulation of the 20S proteasome proteolysis activity. Functionally, component of the proteasome core, a large protease complex with broad specificity involved in protein degradation. The chain is Proteasome subunit beta from Jonesia denitrificans (strain ATCC 14870 / DSM 20603 / BCRC 15368 / CIP 55.134 / JCM 11481 / NBRC 15587 / NCTC 10816 / Prevot 55134) (Listeria denitrificans).